Consider the following 638-residue polypeptide: Meiosis initiator protein (638 aa).

5 disordered regions span residues 1 to 21 (MFGS…SLGP), 60 to 79 (NQRN…KNHT), 138 to 249 (LAGL…KGGQ), 404 to 433 (PSAY…SLHR), and 447 to 537 (GNSK…PCPP). Positions 7–20 (YLGSSEQPRANSLG) are enriched in polar residues. Residues 62 to 75 (RNQNKLLSPNKKQR) are basic motif; degenerate. Residues 62–116 (RNQNKLLSPNKKQRKNHTSKLQELALLLPIALKTGTKKLTKKEILVHVLQYIQYL) enclose the bHLH domain. The helix-loop-helix motif stretch occupies residues 76–116 (KNHTSKLQELALLLPIALKTGTKKLTKKEILVHVLQYIQYL). A compositionally biased stretch (low complexity) spans 157–167 (TPSSSPSSQKS). Over residues 182–191 (TQASESQTRT) the composition is skewed to polar residues. The segment covering 412–430 (PQEKDTASKAPKDPPESHS) has biased composition (basic and acidic residues). A compositionally biased stretch (low complexity) spans 453 to 465 (SSSSSSSSSSSSS). The segment covering 528-537 (KEKKKGPCPP) has biased composition (basic residues). The segment at residues 540-608 (KKKCVNGFIM…QHNRIVKQDG (69 aa)) is a DNA-binding region (HMG box).

Interacts with STRA8.

It localises to the nucleus. Its function is as follows. Gatekeeper of meiotic initiation in both male and female germ cells. In complex with STRA8, directly activates the transcription of a subset of critical meiotic genes playing a central role in cell-cycle switching from mitosis to meiosis. Temporal expression of MEIOSIN is required for meiotic entry decision. This is Meiosis initiator protein from Homo sapiens (Human).